Reading from the N-terminus, the 730-residue chain is Transcription factor verF (730 aa).

A C2H2-type 1 zinc finger spans residues 19–41 (YECSLCLKRYKRREHLFRHIGSH). A C2H2-type 2; atypical zinc finger spans residues 47–69 (YQCNSCDGAFQRADVLKRHLRTC). Positions 83 to 109 (CDRCVRQKKACSSHQPCHSCAKKGAQC) form a DNA-binding region, zn(2)-C6 fungal-type. The span at 120–129 (RLSQHSSTNH) shows a compositional bias: polar residues. Residues 120–151 (RLSQHSSTNHTPKDQELSTQFTNPPPPPSTST) are disordered.

It is found in the nucleus. Functionally, transcription factor; part of the gene cluster that mediates the biosynthesis of the neurotoxin verrucosidin, a methylated alpha-pyrone polyketide that inhibits oxidative phosphorylation in mitochondria and thereby causes neurological diseases. In Penicillium polonicum, this protein is Transcription factor verF.